A 506-amino-acid chain; its full sequence is Putative transporter SVOPL (506 aa).

The next 10 membrane-spanning stretches (helical) occupy residues 57–77, 104–124, 133–153, 190–210, 220–240, 297–317, 362–382, 397–417, 444–464, and 472–492; these read SIGF…ANIV, ALVS…CGYI, VVFG…FSTS, LLPL…VLGM, WMIR…MFIP, TSLL…GSVL, LISC…LNIV, FFFM…LLFL, IGMG…PFIA, and VILA…GVFF.

This sequence belongs to the major facilitator superfamily.

It localises to the membrane. In Danio rerio (Zebrafish), this protein is Putative transporter SVOPL (svopl).